A 222-amino-acid chain; its full sequence is Coiled-coil domain-containing protein 70 (222 aa).

Residues 129–153 (NALWERDRNLLQEDKALWEEEKALW) adopt a coiled-coil conformation.

The polypeptide is Coiled-coil domain-containing protein 70 (Homo sapiens (Human)).